The primary structure comprises 188 residues: Ion-translocating oxidoreductase complex subunit B (188 aa).

The hydrophobic stretch occupies residues 1–23 (MFTAIWVMVGLAIAIGLILGWSA). Positions 29–88 (EGNPLAEKIDAILPQTQCGQCGFPGCRPYAEAIAKGEADINQCPPGGEEGVKKLAELLGV) constitute a 4Fe-4S domain. Residues C46, C49, C54, C71, C113, C116, C119, C123, C143, C146, C149, and C153 each contribute to the [4Fe-4S] cluster site. 4Fe-4S ferredoxin-type domains are found at residues 104 to 133 (SVAF…GAAK) and 134 to 163 (QMHT…MVPI).

The protein belongs to the 4Fe4S bacterial-type ferredoxin family. RnfB subfamily. In terms of assembly, the complex is composed of six subunits: RnfA, RnfB, RnfC, RnfD, RnfE and RnfG. It depends on [4Fe-4S] cluster as a cofactor.

The protein localises to the cell inner membrane. Functionally, part of a membrane-bound complex that couples electron transfer with translocation of ions across the membrane. The polypeptide is Ion-translocating oxidoreductase complex subunit B (Thiobacillus denitrificans (strain ATCC 25259 / T1)).